Reading from the N-terminus, the 339-residue chain is MLSSALYQQAGLSGLLRASAMGPQTPFIASPKETQADPMAFVKDLLAGGTAGAISKTAVAPIERVKLLLQTQDSNPMIKSGQVPRYTGIVNCFVRVSSEQGVASFWRGNLANVVRYFPTQAFNFAFKDTIKGLFPKYSPKTDFWRFFVVNLASGGLAGAGSLLIVYPLDFARTRLAADVGSGKSREFTGLVDCLSKVVKRGGPMALYQGFGVSVQGIIVYRGAYFGLYDTAKGVLFKDERTANFFAKWAVAQAVTAGAGVLSYPFDTVRRRLMMQSGGERQYNGTIDCWRKVAQQEGMKAFFKGAWSNVLRGAGGAFVLVLYDEIKKFINPNAVSSASE.

Solcar repeat units follow at residues 39–133, 145–234, and 246–328; these read MAFV…IKGL, RFFV…AKGV, and AKWA…IKKF. 5 consecutive transmembrane segments (helical) span residues 41–70, 110–134, 144–164, 212–232, and 245–265; these read FVKD…LLLQ, LANV…KGLF, WRFF…SLLI, VSVQ…DTAK, and FAKW…SYPF. ADP-binding residues include Arg115 and Lys127. Arg269 is a binding site for ADP. The tract at residues 269-274 is important for transport activity; sequence RRRLMM. The short motif at 269 to 274 is the Nucleotide carrier signature motif element; that stretch reads RRRLMM. Residues 305 to 322 form a helical membrane-spanning segment; it reads AWSNVLRGAGGAFVLVLY.

The protein belongs to the mitochondrial carrier (TC 2.A.29) family. Monomer.

Its subcellular location is the mitochondrion inner membrane. The catalysed reaction is ADP(in) + ATP(out) = ADP(out) + ATP(in). With respect to regulation, the matrix-open state (m-state) is inhibited by the membrane-permeable bongkrekic acid (BKA). The cytoplasmic-open state (c-state) is inhibited by the membrane-impermeable toxic inhibitor carboxyatractyloside (CATR). In terms of biological role, ADP:ATP antiporter that mediates import of ADP into the mitochondrial matrix for ATP synthesis, and export of ATP out to fuel the cell. Cycles between the cytoplasmic-open state (c-state) and the matrix-open state (m-state): operates by the alternating access mechanism with a single substrate-binding site intermittently exposed to either the cytosolic (c-state) or matrix (m-state) side of the inner mitochondrial membrane. The protein is ADP,ATP carrier protein of Parachlorella kessleri (Green alga).